A 344-amino-acid chain; its full sequence is Dihydroorotase (344 aa).

Positions 14 and 16 each coordinate Zn(2+). Substrate contacts are provided by residues 16 to 18 (HFR) and Asn-42. Zn(2+) contacts are provided by Lys-100, His-137, and His-175. An N6-carboxylysine modification is found at Lys-100. Residue His-137 participates in substrate binding. Leu-220 contributes to the substrate binding site. A Zn(2+)-binding site is contributed by Asp-248. Residue Asp-248 is part of the active site. Residues His-252 and Ala-264 each coordinate substrate.

The protein belongs to the metallo-dependent hydrolases superfamily. DHOase family. Class II DHOase subfamily. Homodimer. Zn(2+) is required as a cofactor.

The enzyme catalyses (S)-dihydroorotate + H2O = N-carbamoyl-L-aspartate + H(+). Its pathway is pyrimidine metabolism; UMP biosynthesis via de novo pathway; (S)-dihydroorotate from bicarbonate: step 3/3. Functionally, catalyzes the reversible cyclization of carbamoyl aspartate to dihydroorotate. This Erythrobacter litoralis (strain HTCC2594) protein is Dihydroorotase.